The chain runs to 483 residues: Proline--tRNA ligase (483 aa).

The protein belongs to the class-II aminoacyl-tRNA synthetase family. ProS type 3 subfamily. In terms of assembly, homodimer.

The protein resides in the cytoplasm. The enzyme catalyses tRNA(Pro) + L-proline + ATP = L-prolyl-tRNA(Pro) + AMP + diphosphate. In terms of biological role, catalyzes the attachment of proline to tRNA(Pro) in a two-step reaction: proline is first activated by ATP to form Pro-AMP and then transferred to the acceptor end of tRNA(Pro). The polypeptide is Proline--tRNA ligase (Natranaerobius thermophilus (strain ATCC BAA-1301 / DSM 18059 / JW/NM-WN-LF)).